The sequence spans 491 residues: MIFHKNWLGLIFLLLFLGIINVMRVPRDNSVKLKRTALEWSLATLTATLILWAAFDMEGQFQTINQTEWIVPPALNFKWGPLFLAVDGISLFFLILTALLTPICILISWNSIKFLLKEFLLCLLFLEVLLMGVFSALDLLLFYILFEGILIPMFLLIGVWGSREEKVRASYYFFFYTFVGSVFMLLGIFQLYSSVGTTDYQALLNIELPISTQKWIFAGFFLSLAVKIPQVPFHIWLPQAHVEAPVSGSVILAGILLKLGGYGFLRFTWPILPAATEYFAPFVIMLSVIAIIYGSLTTCRQVDLKRLIAYSSVAHMGLVTLGLFTHTIEGLVAAVFMMLAHGLVSSALFIAVTYLYERHHTRLIKYYRGITFSMPIFVSVFLVLTLTNMAIPLSCNFVAEFFSLLAAFEYNIVIGVLAATGMVWSAAYSLYLYNRVSFGASSNYLLFTRDLNRRELIAISPLVILIFILGVLPSLIIDPVKNAIMFSPGGA.

A run of 14 helical transmembrane segments spans residues 2–22, 37–57, 89–109, 114–134, 139–159, 169–189, 215–235, 245–265, 271–291, 308–328, 332–352, 372–392, 412–432, and 457–477; these read IFHK…IINV, ALEW…AFDM, ISLF…LISW, FLLK…MGVF, LLLF…LIGV, ASYY…LGIF, WIFA…PFHI, PVSG…YGFL, ILPA…VIAI, IAYS…THTI, VAAV…FIAV, FSMP…MAIP, IVIG…SLYL, and IAIS…SLII.

Belongs to the complex I subunit 4 family.

The protein localises to the mitochondrion membrane. The enzyme catalyses a ubiquinone + NADH + 5 H(+)(in) = a ubiquinol + NAD(+) + 4 H(+)(out). In terms of biological role, core subunit of the mitochondrial membrane respiratory chain NADH dehydrogenase (Complex I) that is believed to belong to the minimal assembly required for catalysis. Complex I functions in the transfer of electrons from NADH to the respiratory chain. The immediate electron acceptor for the enzyme is believed to be ubiquinone. In Metridium senile (Brown sea anemone), this protein is NADH-ubiquinone oxidoreductase chain 4 (ND4).